The primary structure comprises 412 residues: Imidazolonepropionase (412 aa).

Residues His-76 and His-78 each contribute to the Fe(3+) site. Positions 76 and 78 each coordinate Zn(2+). 4-imidazolone-5-propanoate contacts are provided by Arg-85, Tyr-148, and His-181. An N-formimidoyl-L-glutamate-binding site is contributed by Tyr-148. His-242 is a binding site for Fe(3+). His-242 is a Zn(2+) binding site. Glu-245 is a 4-imidazolone-5-propanoate binding site. Position 317 (Asp-317) interacts with Fe(3+). Asp-317 is a Zn(2+) binding site. Positions 319 and 321 each coordinate N-formimidoyl-L-glutamate. Ser-322 provides a ligand contact to 4-imidazolone-5-propanoate.

The protein belongs to the metallo-dependent hydrolases superfamily. HutI family. It depends on Zn(2+) as a cofactor. Requires Fe(3+) as cofactor.

The protein resides in the cytoplasm. The enzyme catalyses 4-imidazolone-5-propanoate + H2O = N-formimidoyl-L-glutamate. It functions in the pathway amino-acid degradation; L-histidine degradation into L-glutamate; N-formimidoyl-L-glutamate from L-histidine: step 3/3. Functionally, catalyzes the hydrolytic cleavage of the carbon-nitrogen bond in imidazolone-5-propanoate to yield N-formimidoyl-L-glutamate. It is the third step in the universal histidine degradation pathway. This Staphylococcus aureus (strain bovine RF122 / ET3-1) protein is Imidazolonepropionase.